Here is a 195-residue protein sequence, read N- to C-terminus: ATP-dependent Clp protease proteolytic subunit (195 aa).

Ser98 acts as the Nucleophile in catalysis. His123 is a catalytic residue.

This sequence belongs to the peptidase S14 family. Fourteen ClpP subunits assemble into 2 heptameric rings which stack back to back to give a disk-like structure with a central cavity, resembling the structure of eukaryotic proteasomes.

The protein localises to the cytoplasm. It catalyses the reaction Hydrolysis of proteins to small peptides in the presence of ATP and magnesium. alpha-casein is the usual test substrate. In the absence of ATP, only oligopeptides shorter than five residues are hydrolyzed (such as succinyl-Leu-Tyr-|-NHMec, and Leu-Tyr-Leu-|-Tyr-Trp, in which cleavage of the -Tyr-|-Leu- and -Tyr-|-Trp bonds also occurs).. Its function is as follows. Cleaves peptides in various proteins in a process that requires ATP hydrolysis. Has a chymotrypsin-like activity. Plays a major role in the degradation of misfolded proteins. This Alkaliphilus oremlandii (strain OhILAs) (Clostridium oremlandii (strain OhILAs)) protein is ATP-dependent Clp protease proteolytic subunit.